Consider the following 471-residue polypeptide: MPN domain-containing protein (471 aa).

Residues 1-10 (MAAPEPLSPA) are compositionally biased toward low complexity. Residues 1–63 (MAAPEPLSPA…GGGGAGAGGC (63 aa)) are disordered. Ala-2 is modified (N-acetylalanine). Residue Ser-8 is modified to Phosphoserine. The segment covering 16–29 (EAPEEDEDEAEAED) has biased composition (acidic residues). Residues 36–63 (GAGGGRSGGGGSSVSGGGGGGGAGAGGC) are compositionally biased toward gly residues. The RAMA domain occupies 71–166 (TRRAVTLRVL…KYKATWLRLH (96 aa)). DNA is bound by residues Ser-123, Ser-125, and Trp-145. The interval 170-229 (TPATAADESPASEGEEEELLMEEEEEDVLAGVSAEDKSRRPLGKSPSEPAHPEATTPGKR) is disordered. A phosphoserine mark is found at Ser-178 and Ser-181. The span at 182–197 (EGEEEELLMEEEEEDV) shows a compositional bias: acidic residues. An MPN domain is found at 272–407 (VAVSSNVLFL…PESKISPFWV (136 aa)). His-349, His-351, and Asp-362 together coordinate Zn(2+). A JAMM motif motif is present at residues 349 to 362 (HSHPHSPALPSLQD).

It belongs to the peptidase M67 family. In terms of assembly, monomer. Mainly monomoric, but when binds to dsDNA, forms homotetramer assembled into two homodimers. May interact with histones; this interaction is facilitated by dsDNA binding. Degraded following binding to N(6)-methyladenosine methylated DNA (m6A).

Its function is as follows. Probable protease. Acts as a sensor of N(6)-methyladenosine methylation on DNA (m6A): recognizes and binds m6A DNA, leading to its degradation. Binds only double strand DNA (dsDNA) in a sequence-independent manner. This Homo sapiens (Human) protein is MPN domain-containing protein.